The sequence spans 383 residues: MLISNTYNQHFPQLTQEQLARNATKKVICGMSGGVDSSVSAFILQQQGYQVEGLFMKNWEEDDDTDYCTAAADLADAQAVCDKLGIKLHKINFAAEYWDNVFEHFLTEYKAGRTPNPDILCNKEIKFKAFLEYAAEDLGADYIATGHYVRRAGDNENAKLLRGLDPNKDQSYFLYTLSHKQVGQSLFPVGEIEKPIVRAIAEDLGLITAKKKDSTGICFIGERKFKDFLARYLPAQPGNIRTVDDEIIGRHDGLMYHTLGQRKGLGIGGLKNAGDEAWYVVDKDVENNELIVAQGHDHPRLFSKGLIASQLHWVDREPIRESLRCTVKTRYRQQDIPCVIEPIDDETIRVIFDEPQSAVTPGQSAVFYLGEVCLGGGIIAERI.

ATP is bound by residues 30–37 (GMSGGVDS) and M56. The tract at residues 116–118 (NPD) is interaction with target base in tRNA. C121 (nucleophile) is an active-site residue. Cysteines 121 and 218 form a disulfide. G146 provides a ligand contact to ATP. Positions 168–170 (KDQ) are interaction with tRNA. C218 functions as the Cysteine persulfide intermediate in the catalytic mechanism. Residues 330 to 331 (RY) form an interaction with tRNA region.

This sequence belongs to the MnmA/TRMU family.

Its subcellular location is the cytoplasm. The enzyme catalyses S-sulfanyl-L-cysteinyl-[protein] + uridine(34) in tRNA + AH2 + ATP = 2-thiouridine(34) in tRNA + L-cysteinyl-[protein] + A + AMP + diphosphate + H(+). Its function is as follows. Catalyzes the 2-thiolation of uridine at the wobble position (U34) of tRNA, leading to the formation of s(2)U34. In Haemophilus influenzae (strain ATCC 51907 / DSM 11121 / KW20 / Rd), this protein is tRNA-specific 2-thiouridylase MnmA.